The chain runs to 235 residues: Large ribosomal subunit protein uL1 (235 aa).

The protein belongs to the universal ribosomal protein uL1 family. In terms of assembly, part of the 50S ribosomal subunit.

Functionally, binds directly to 23S rRNA. The L1 stalk is quite mobile in the ribosome, and is involved in E site tRNA release. Protein L1 is also a translational repressor protein, it controls the translation of the L11 operon by binding to its mRNA. This is Large ribosomal subunit protein uL1 from Mycobacterium sp. (strain JLS).